The primary structure comprises 141 residues: 3-hydroxyacyl-[acyl-carrier-protein] dehydratase FabZ (141 aa).

His-48 is a catalytic residue.

It belongs to the thioester dehydratase family. FabZ subfamily.

It localises to the cytoplasm. The enzyme catalyses a (3R)-hydroxyacyl-[ACP] = a (2E)-enoyl-[ACP] + H2O. In terms of biological role, involved in unsaturated fatty acids biosynthesis. Catalyzes the dehydration of short chain beta-hydroxyacyl-ACPs and long chain saturated and unsaturated beta-hydroxyacyl-ACPs. In Herpetosiphon aurantiacus (strain ATCC 23779 / DSM 785 / 114-95), this protein is 3-hydroxyacyl-[acyl-carrier-protein] dehydratase FabZ.